A 99-amino-acid polypeptide reads, in one-letter code: HTH-type transcriptional regulator YgaV (99 aa).

The HTH arsR-type domain maps to 7–99 (LQASAEQAAA…IATLKNVYCP (93 aa)). The segment at residues 41 to 64 (AGELTRITGLSASATSQHLARMRD) is a DNA-binding region (H-T-H motif).

In the presence of H(2)S, two cysteine residues form an intramolecular tetrasulfide bond, which attenuates the binding of YgaV to DNA. Both unmodified YgaV and sulfide-modified YgaV can probably function as either a repressor or an activator. Binds heme, which may influence the DNA-binding affinity. In terms of biological role, transcriptional regulator that regulates large-scale gene expression in response to sulfide. May act as a global regulator responsible for redox homeostasis. It functions as both a repressor and an activator. In the absence of sulfide compounds, it negatively regulates many anaerobic respiratory genes, including formate, fumarate, lactate, nitrate and nitrite reductase genes. In the presence of hydrogen sulfide (H(2)S), YgaV activity is attenuated, leading to the expression of anaerobic respiratory and ROS scavenging genes, which contributes to redox homeostasis, reactive oxygen species (ROS) scavenging and antibiotic tolerance. It responds to H(2)O(2) scavenging and increases antibiotic tolerance under H(2)S-atmospheric conditions. It also negatively regulates its own expression by binding to the ygaVP promoter region. May also be involved in regulatory mechanisms that operate independently of sulfide. This Escherichia coli (strain K12) protein is HTH-type transcriptional regulator YgaV (ygaV).